The primary structure comprises 459 residues: Putrescine aminotransferase (459 aa).

Residues 150–151 and Gln274 contribute to the pyridoxal 5'-phosphate site; that span reads GT. Lys300 is modified (N6-(pyridoxal phosphate)lysine). Thr332 contributes to the pyridoxal 5'-phosphate binding site.

This sequence belongs to the class-III pyridoxal-phosphate-dependent aminotransferase family. Putrescine aminotransferase subfamily. It depends on pyridoxal 5'-phosphate as a cofactor.

It catalyses the reaction an alkane-alpha,omega-diamine + 2-oxoglutarate = an omega-aminoaldehyde + L-glutamate. The catalysed reaction is putrescine + 2-oxoglutarate = 1-pyrroline + L-glutamate + H2O. The enzyme catalyses cadaverine + 2-oxoglutarate = 5-aminopentanal + L-glutamate. It functions in the pathway amine and polyamine degradation; putrescine degradation; 4-aminobutanal from putrescine (transaminase route): step 1/1. Its function is as follows. Catalyzes the aminotransferase reaction from putrescine to 2-oxoglutarate, leading to glutamate and 4-aminobutanal, which spontaneously cyclizes to form 1-pyrroline. This is the first step in one of two pathways for putrescine degradation, where putrescine is converted into 4-aminobutanoate (gamma-aminobutyrate or GABA) via 4-aminobutanal. Also functions as a cadaverine transaminase in a a L-lysine degradation pathway to succinate that proceeds via cadaverine, glutarate and L-2-hydroxyglutarate. The sequence is that of Putrescine aminotransferase from Escherichia coli O7:K1 (strain IAI39 / ExPEC).